We begin with the raw amino-acid sequence, 612 residues long: Dihydroxy-acid dehydratase (612 aa).

Residue D81 participates in Mg(2+) binding. Residue C122 coordinates [2Fe-2S] cluster. Mg(2+) is bound by residues D123 and K124. K124 bears the N6-carboxylysine mark. C196 serves as a coordination point for [2Fe-2S] cluster. Mg(2+) is bound at residue E492. The active-site Proton acceptor is the S518.

It belongs to the IlvD/Edd family. As to quaternary structure, homodimer. Requires [2Fe-2S] cluster as cofactor. The cofactor is Mg(2+).

The catalysed reaction is (2R)-2,3-dihydroxy-3-methylbutanoate = 3-methyl-2-oxobutanoate + H2O. The enzyme catalyses (2R,3R)-2,3-dihydroxy-3-methylpentanoate = (S)-3-methyl-2-oxopentanoate + H2O. It participates in amino-acid biosynthesis; L-isoleucine biosynthesis; L-isoleucine from 2-oxobutanoate: step 3/4. The protein operates within amino-acid biosynthesis; L-valine biosynthesis; L-valine from pyruvate: step 3/4. In terms of biological role, functions in the biosynthesis of branched-chain amino acids. Catalyzes the dehydration of (2R,3R)-2,3-dihydroxy-3-methylpentanoate (2,3-dihydroxy-3-methylvalerate) into 2-oxo-3-methylpentanoate (2-oxo-3-methylvalerate) and of (2R)-2,3-dihydroxy-3-methylbutanoate (2,3-dihydroxyisovalerate) into 2-oxo-3-methylbutanoate (2-oxoisovalerate), the penultimate precursor to L-isoleucine and L-valine, respectively. The chain is Dihydroxy-acid dehydratase from Cereibacter sphaeroides (strain ATCC 17029 / ATH 2.4.9) (Rhodobacter sphaeroides).